Here is a 137-residue protein sequence, read N- to C-terminus: CUB domain-containing protein (137 aa).

Positions 1–21 (MRLSRAFAWPLLCSIATTVKA) are cleaved as a signal peptide. 2 disulfide bridges follow: C30–C51 and C75–C96. The 103-residue stretch at 30 to 132 (CGGHYTDEYG…TFFEIYYFVD (103 aa)) folds into the CUB domain.

This Homo sapiens (Human) protein is CUB domain-containing protein.